Reading from the N-terminus, the 437-residue chain is GTPase Der (437 aa).

EngA-type G domains are found at residues 2–167 (ATVL…EKKG) and 180–356 (IRVA…NSLF). GTP contacts are provided by residues 8-15 (GKSNVGKS), 55-59 (DTCGI), 118-121 (NKSE), 186-193 (GRPNAGKS), 233-237 (DTAGL), and 299-302 (NKID). The 81-residue stretch at 357-437 (YRVQTSAVNA…PIFLKFKNRH (81 aa)) folds into the KH-like domain.

Belongs to the TRAFAC class TrmE-Era-EngA-EngB-Septin-like GTPase superfamily. EngA (Der) GTPase family. In terms of assembly, associates with the 50S ribosomal subunit.

Functionally, GTPase that plays an essential role in the late steps of ribosome biogenesis. The sequence is that of GTPase Der from Thermosipho melanesiensis (strain DSM 12029 / CIP 104789 / BI429).